A 95-amino-acid chain; its full sequence is Mitochondrial import inner membrane translocase subunit TIM13 (95 aa).

The short motif at 47 to 67 is the Twin CX3C motif element; sequence CFEKCLQSPYKDGNEGCVDQC. Intrachain disulfides connect C47-C67 and C51-C63.

Belongs to the small Tim family. As to quaternary structure, heterohexamer; composed of 3 copies of TIM8 and 3 copies of TIM13, named soluble 70 kDa complex. Associates with the TIM22 complex, whose core is composed of TIM22 and TIM54. Interacts with the transmembrane regions of multi-pass transmembrane proteins in transit.

It localises to the mitochondrion inner membrane. Functionally, mitochondrial intermembrane chaperone that participates in the import and insertion of some multi-pass transmembrane proteins into the mitochondrial inner membrane. Also required for the transfer of beta-barrel precursors from the TOM complex to the sorting and assembly machinery (SAM complex) of the outer membrane. Acts as a chaperone-like protein that protects the hydrophobic precursors from aggregation and guide them through the mitochondrial intermembrane space. The TIM8-TIM13 complex is non essential and only mediates the import of few proteins, while the predominant TIM9-TIM10 70 kDa complex is crucial and mediates the import of much more proteins. The protein is Mitochondrial import inner membrane translocase subunit TIM13 (TIM13) of Candida glabrata (strain ATCC 2001 / BCRC 20586 / JCM 3761 / NBRC 0622 / NRRL Y-65 / CBS 138) (Yeast).